The primary structure comprises 237 residues: Cell division cycle-associated protein 4 (237 aa).

The 48-residue stretch at 26-73 (YSLQRQSLLDMSLVKLQLCHMLVEPNLCRSVLIANTVRQIQEEMSQDG) folds into the SERTA domain.

As to expression, expressed preferentially in hematopoietic progenitors and mature blood cells. Expressed at low levels in the heart, lung, spleen, and thymus and at a higher level in muscle.

The protein resides in the nucleus. Functionally, may participate in the regulation of cell proliferation through the E2F/RB pathway. May be involved in molecular regulation of hematopoietic stem cells and progenitor cell lineage commitment and differentiation. This chain is Cell division cycle-associated protein 4 (Cdca4), found in Mus musculus (Mouse).